A 229-amino-acid polypeptide reads, in one-letter code: 4-hydroxy-tetrahydrodipicolinate reductase (229 aa).

NAD(+) is bound by residues 10–15, 78–80, and 102–105; these read GSAGRM, GTT, and SSNM. H133 serves as the catalytic Proton donor/acceptor. H134 provides a ligand contact to (S)-2,3,4,5-tetrahydrodipicolinate. The active-site Proton donor is the K137. (S)-2,3,4,5-tetrahydrodipicolinate is bound at residue 143–144; sequence GT.

This sequence belongs to the DapB family.

Its subcellular location is the cytoplasm. It catalyses the reaction (S)-2,3,4,5-tetrahydrodipicolinate + NAD(+) + H2O = (2S,4S)-4-hydroxy-2,3,4,5-tetrahydrodipicolinate + NADH + H(+). The enzyme catalyses (S)-2,3,4,5-tetrahydrodipicolinate + NADP(+) + H2O = (2S,4S)-4-hydroxy-2,3,4,5-tetrahydrodipicolinate + NADPH + H(+). It participates in amino-acid biosynthesis; L-lysine biosynthesis via DAP pathway; (S)-tetrahydrodipicolinate from L-aspartate: step 4/4. Catalyzes the conversion of 4-hydroxy-tetrahydrodipicolinate (HTPA) to tetrahydrodipicolinate. The sequence is that of 4-hydroxy-tetrahydrodipicolinate reductase from Bdellovibrio bacteriovorus (strain ATCC 15356 / DSM 50701 / NCIMB 9529 / HD100).